Consider the following 199-residue polypeptide: Adenylyl-sulfate kinase (199 aa).

34 to 41 (GLSGSGKS) contributes to the ATP binding site. Ser-108 serves as the catalytic Phosphoserine intermediate.

Belongs to the APS kinase family.

It carries out the reaction adenosine 5'-phosphosulfate + ATP = 3'-phosphoadenylyl sulfate + ADP + H(+). The protein operates within sulfur metabolism; hydrogen sulfide biosynthesis; sulfite from sulfate: step 2/3. Functionally, catalyzes the synthesis of activated sulfate. The polypeptide is Adenylyl-sulfate kinase (Oceanobacillus iheyensis (strain DSM 14371 / CIP 107618 / JCM 11309 / KCTC 3954 / HTE831)).